Reading from the N-terminus, the 149-residue chain is Large ribosomal subunit protein bL9 (149 aa).

It belongs to the bacterial ribosomal protein bL9 family.

In terms of biological role, binds to the 23S rRNA. The protein is Large ribosomal subunit protein bL9 of Xanthomonas axonopodis pv. citri (strain 306).